We begin with the raw amino-acid sequence, 451 residues long: MDKFFEYIKNQNLSLEDEKLADKLDQLDQLSSIKEEFYFPITKDIATDLSRVKDEDLDKPVIYLTGNSLGLQPKEIEKQLVCNYLNDWRKYGVEGHHKGDHPFIHIDEEIQASLSKIVGALPSEVCPMNSLSTNIHVLLSNFYKPTQTRHKIIIEYGAFPSDLYVTESQIRHNSFNPETSLIKIKPRDGEYTLRTDDIINVLKEHGDSVAVVMLSGIQYFTGQFFDMKKITEVGHEIGAIVGWDLAHAAGNVELSLHDWNVDFACWCTYKYLNSGPGCIAGIFVHSKHTESFNLSTDSRLLGWFGNKLSNRFQKEKEFVAEDGALGFRMSNPSVADCTALRASLSVFEKAGGIKKLAEKSTIITGYLEYLLTHKLKTTDVQIITPSEANQRGSQLSLLIKGIKASQLKVNLSNSGIVCDVRDPDVIRVAPAPLYTSFNDVKYFIQKLNENM.

Pyridoxal 5'-phosphate-binding positions include Leu131, Ser132, 159 to 162 (FPSD), Ser215, Asp244, His247, and Tyr269. Lys270 carries the post-translational modification N6-(pyridoxal phosphate)lysine. Pyridoxal 5'-phosphate is bound by residues Trp303 and Asn331.

It belongs to the kynureninase family. Homodimer. Pyridoxal 5'-phosphate serves as cofactor.

The protein localises to the cytoplasm. The catalysed reaction is L-kynurenine + H2O = anthranilate + L-alanine + H(+). It carries out the reaction 3-hydroxy-L-kynurenine + H2O = 3-hydroxyanthranilate + L-alanine + H(+). The protein operates within amino-acid degradation; L-kynurenine degradation; L-alanine and anthranilate from L-kynurenine: step 1/1. Its pathway is cofactor biosynthesis; NAD(+) biosynthesis; quinolinate from L-kynurenine: step 2/3. Its function is as follows. Catalyzes the cleavage of L-kynurenine (L-Kyn) and L-3-hydroxykynurenine (L-3OHKyn) into anthranilic acid (AA) and 3-hydroxyanthranilic acid (3-OHAA), respectively. In Dictyostelium discoideum (Social amoeba), this protein is Kynureninase.